Consider the following 300-residue polypeptide: Bidirectional sugar transporter SWEET12 (300 aa).

Residues 1-4 (MVQA) are Extracellular-facing. The helical transmembrane segment at 5–25 (LVFAVGIVGNILSFLVILAPV) threads the bilayer. The region spanning 8 to 92 (AVGIVGNILS…TVYLLYAPRQ (85 aa)) is the MtN3/slv 1 domain. Residues 26–38 (PTFYRVYKKKSTE) lie on the Cytoplasmic side of the membrane. A helical transmembrane segment spans residues 39–61 (SFQSVPYAVALLSAMLWLYYALL). Over 62-67 (TSDLLL) the chain is Extracellular. Residues 68–88 (LSINSIGCLVESLYLTVYLLY) traverse the membrane as a helical segment. Topologically, residues 89–99 (APRQAMAFTLK) are cytoplasmic. Residues 100–120 (LVCAMNLALFAAVVAALQLLV) form a helical membrane-spanning segment. Topologically, residues 121-128 (KATDRRVT) are extracellular. The helical transmembrane segment at 129 to 149 (LAGGIGASFALAVFVAPLTII) threads the bilayer. A MtN3/slv 2 domain is found at 131–213 (GGIGASFALA…VLYVVYKNPK (83 aa)). The Cytoplasmic segment spans residues 150–162 (RQVIRTKSVEFMP). The chain crosses the membrane as a helical span at residues 163 to 183 (FWLSFFLTLSAVVWFFYGLLM). The Extracellular segment spans residues 184–185 (KD). The helical transmembrane segment at 186-206 (FFVATPNVLGLLFGLAQMVLY) threads the bilayer. Residues 207-300 (VVYKNPKKNS…PPALPAVEVA (94 aa)) lie on the Cytoplasmic side of the membrane. Residues 256–300 (ADLEAAAPATPQRPADDDAIDHRSVVVDIPPPPQPPPALPAVEVA) are disordered. The segment covering 269 to 280 (PADDDAIDHRSV) has biased composition (basic and acidic residues). Pro residues predominate over residues 284–294 (IPPPPQPPPAL).

Belongs to the SWEET sugar transporter family. As to quaternary structure, forms homooligomers and/or heterooligomers.

Its subcellular location is the cell membrane. Its function is as follows. Mediates both low-affinity uptake and efflux of sugar across the plasma membrane. Confers blight susceptibility. Confers TAL effector-mediated susceptibility to Xanthomonas oryzae pv. oryzae. In Oryza sativa subsp. japonica (Rice), this protein is Bidirectional sugar transporter SWEET12 (SWEET12).